A 360-amino-acid chain; its full sequence is tRNA-specific 2-thiouridylase MnmA (360 aa).

ATP contacts are provided by residues 9 to 16 (AMSGGVDS) and Leu-35. Cys-104 (nucleophile) is an active-site residue. Cys-104 and Cys-197 are joined by a disulfide. Residue Gly-128 coordinates ATP. An interaction with tRNA region spans residues 147–149 (KDQ). Cys-197 (cysteine persulfide intermediate) is an active-site residue.

This sequence belongs to the MnmA/TRMU family.

Its subcellular location is the cytoplasm. The catalysed reaction is S-sulfanyl-L-cysteinyl-[protein] + uridine(34) in tRNA + AH2 + ATP = 2-thiouridine(34) in tRNA + L-cysteinyl-[protein] + A + AMP + diphosphate + H(+). In terms of biological role, catalyzes the 2-thiolation of uridine at the wobble position (U34) of tRNA, leading to the formation of s(2)U34. This Salinispora arenicola (strain CNS-205) protein is tRNA-specific 2-thiouridylase MnmA.